Consider the following 426-residue polypeptide: Glutamate-1-semialdehyde 2,1-aminomutase (426 aa).

Lys265 is subject to N6-(pyridoxal phosphate)lysine.

The protein belongs to the class-III pyridoxal-phosphate-dependent aminotransferase family. HemL subfamily. Homodimer. Pyridoxal 5'-phosphate is required as a cofactor.

The protein localises to the cytoplasm. It carries out the reaction (S)-4-amino-5-oxopentanoate = 5-aminolevulinate. Its pathway is porphyrin-containing compound metabolism; protoporphyrin-IX biosynthesis; 5-aminolevulinate from L-glutamyl-tRNA(Glu): step 2/2. This is Glutamate-1-semialdehyde 2,1-aminomutase from Neisseria gonorrhoeae (strain NCCP11945).